The primary structure comprises 498 residues: ATP synthase subunit beta, chloroplastic (498 aa).

172–179 (GGAGVGKT) is a binding site for ATP.

The protein belongs to the ATPase alpha/beta chains family. In terms of assembly, F-type ATPases have 2 components, CF(1) - the catalytic core - and CF(0) - the membrane proton channel. CF(1) has five subunits: alpha(3), beta(3), gamma(1), delta(1), epsilon(1). CF(0) has four main subunits: a(1), b(1), b'(1) and c(9-12).

The protein localises to the plastid. The protein resides in the chloroplast thylakoid membrane. The catalysed reaction is ATP + H2O + 4 H(+)(in) = ADP + phosphate + 5 H(+)(out). In terms of biological role, produces ATP from ADP in the presence of a proton gradient across the membrane. The catalytic sites are hosted primarily by the beta subunits. The chain is ATP synthase subunit beta, chloroplastic from Triticum aestivum (Wheat).